Reading from the N-terminus, the 442-residue chain is MRGAMELEPELLLQEARENVEAAQSYRRELGHRLEGLREARRQIKESASQTRDVLKQHFNDLKGTLGKLLDERLVTLLQEVDTIEQETIKPLDDCQKLIEHGVNTAEDLVREGEIAMLGGVGEENEKLWSFTKKASHIQLDSLPEVPLLVDVPCLSAQLDDSILNIVKDHIFKHGTVASRPPVQIEELIEKPGGIIVRWCKVDDDFTAQDYRLQFRKCTSNHFEDVYVGSETEFIVLHIDPNVDYQFRVCARGDGRQEWSPWSVPQIGHSTLVPHEWTAGFEGYSLSSRRNIALRNDSESSGVLYSRAPTYFCGQTLTFRVETVGQPDRRDSIGVCAEKQDGYDSLQRDQAVCISTNGAVFVNGKEMTNQLPAVTSGSTVTFDIEAVTLGTTSNNEGGHFKLRVTISSNNREVVFDWLLDQSCGSLYFGCSFFYPGWKVLVF.

Met-1 bears the N-acetylmethionine mark. The stretch at 10–57 (ELLLQEARENVEAAQSYRRELGHRLEGLREARRQIKESASQTRDVLKQ) forms a coiled coil. The Fibronectin type-III domain occupies 181–274 (PPVQIEELIE…PQIGHSTLVP (94 aa)).

The protein belongs to the cytokine receptor-like factor 3 family. In terms of tissue distribution, expressed in several embryonic and adult tissues, including adult and fetal brain, liver, spleen and pancreas. Expressed in adult, but not fetal kidney. Expressed in skin and squamous cell carcinoma (SCC) and in several other cancer types. Also detected in lesion actinic keratosis (AK).

It is found in the cytoplasm. Functionally, may play a role in the negative regulation of cell cycle progression. This is Cytokine receptor-like factor 3 (CRLF3) from Homo sapiens (Human).